The following is a 175-amino-acid chain: Bifunctional protein PyrR (175 aa).

Positions 98 to 110 (VIIIDDVLYTGRT) match the PRPP-binding motif.

The protein belongs to the purine/pyrimidine phosphoribosyltransferase family. PyrR subfamily. Homodimer and homohexamer; in equilibrium.

The catalysed reaction is UMP + diphosphate = 5-phospho-alpha-D-ribose 1-diphosphate + uracil. Functionally, regulates transcriptional attenuation of the pyrimidine nucleotide (pyr) operon by binding in a uridine-dependent manner to specific sites on pyr mRNA. This disrupts an antiterminator hairpin in the RNA and favors formation of a downstream transcription terminator, leading to a reduced expression of downstream genes. Its function is as follows. Also displays a weak uracil phosphoribosyltransferase activity which is not physiologically significant. This Staphylococcus carnosus (strain TM300) protein is Bifunctional protein PyrR.